The chain runs to 150 residues: Ribosome-binding factor A (150 aa).

Residues 119–150 are disordered; sequence VAERAKSAQPAGEPDPYRFDGAAAADDDEPAT.

The protein belongs to the RbfA family. In terms of assembly, monomer. Binds 30S ribosomal subunits, but not 50S ribosomal subunits or 70S ribosomes.

It localises to the cytoplasm. One of several proteins that assist in the late maturation steps of the functional core of the 30S ribosomal subunit. Associates with free 30S ribosomal subunits (but not with 30S subunits that are part of 70S ribosomes or polysomes). Required for efficient processing of 16S rRNA. May interact with the 5'-terminal helix region of 16S rRNA. The sequence is that of Ribosome-binding factor A from Acidothermus cellulolyticus (strain ATCC 43068 / DSM 8971 / 11B).